We begin with the raw amino-acid sequence, 476 residues long: Calcium/calmodulin-dependent protein kinase type 1G (476 aa).

Positions 23–277 (FIFMEVLGSG…CEKALSHPWI (255 aa)) constitute a Protein kinase domain. ATP is bound by residues 29-37 (LGSGAFSEV) and lysine 52. Residue aspartate 143 is the Proton acceptor of the active site. An autoinhibitory domain region spans residues 277 to 317 (IDGNTALHRDIYPSVSLQIQKNFAKSKWRQAFNAAAVVHHM). The calmodulin-binding stretch occupies residues 297–318 (KNFAKSKWRQAFNAAAVVHHMR). Positions 325 to 352 (HSPGVRPEVENRPPETQASETSRPSSPE) are disordered. Residues 338 to 352 (PETQASETSRPSSPE) are compositionally biased toward polar residues.

Belongs to the protein kinase superfamily. CAMK Ser/Thr protein kinase family. CaMK subfamily. Post-translationally, may be prenylated on Cys-473. In terms of tissue distribution, mainly expressed in brain with small amounts in skeletal muscles, kidney, spleen and liver. Strongly expressed in forebrain neocortex, striatum and limbic system.

It localises to the cytoplasm. The protein localises to the golgi apparatus membrane. It is found in the cell membrane. The enzyme catalyses L-seryl-[protein] + ATP = O-phospho-L-seryl-[protein] + ADP + H(+). It carries out the reaction L-threonyl-[protein] + ATP = O-phospho-L-threonyl-[protein] + ADP + H(+). Its activity is regulated as follows. Activated by Ca(2+)/calmodulin. Binding of calmodulin is thought to result in a conformational change and leads to activation through phosphorylation by CAMKK1. In terms of biological role, calcium/calmodulin-dependent protein kinase belonging to a proposed calcium-triggered signaling cascade. In vitro phosphorylates transcription factor CREB1. This is Calcium/calmodulin-dependent protein kinase type 1G (CAMK1G) from Homo sapiens (Human).